Reading from the N-terminus, the 20-residue chain is SGGAHGEEGSARMXKALTYF.

The protein belongs to the cytochrome c oxidase subunit 6A family. As to quaternary structure, component of the cytochrome c oxidase (complex IV, CIV), a multisubunit enzyme composed of 14 subunits. The complex is composed of a catalytic core of 3 subunits MT-CO1, MT-CO2 and MT-CO3, encoded in the mitochondrial DNA, and 11 supernumerary subunits COX4I, COX5A, COX5B, COX6A, COX6B, COX6C, COX7A, COX7B, COX7C, COX8 and NDUFA4, which are encoded in the nuclear genome. The complex exists as a monomer or a dimer and forms supercomplexes (SCs) in the inner mitochondrial membrane with NADH-ubiquinone oxidoreductase (complex I, CI) and ubiquinol-cytochrome c oxidoreductase (cytochrome b-c1 complex, complex III, CIII), resulting in different assemblies (supercomplex SCI(1)III(2)IV(1) and megacomplex MCI(2)III(2)IV(2)). As to expression, liver specific isoform.

The protein resides in the mitochondrion inner membrane. It functions in the pathway energy metabolism; oxidative phosphorylation. Functionally, component of the cytochrome c oxidase, the last enzyme in the mitochondrial electron transport chain which drives oxidative phosphorylation. The respiratory chain contains 3 multisubunit complexes succinate dehydrogenase (complex II, CII), ubiquinol-cytochrome c oxidoreductase (cytochrome b-c1 complex, complex III, CIII) and cytochrome c oxidase (complex IV, CIV), that cooperate to transfer electrons derived from NADH and succinate to molecular oxygen, creating an electrochemical gradient over the inner membrane that drives transmembrane transport and the ATP synthase. Cytochrome c oxidase is the component of the respiratory chain that catalyzes the reduction of oxygen to water. Electrons originating from reduced cytochrome c in the intermembrane space (IMS) are transferred via the dinuclear copper A center (CU(A)) of subunit 2 and heme A of subunit 1 to the active site in subunit 1, a binuclear center (BNC) formed by heme A3 and copper B (CU(B)). The BNC reduces molecular oxygen to 2 water molecules unsing 4 electrons from cytochrome c in the IMS and 4 protons from the mitochondrial matrix. The chain is Cytochrome c oxidase subunit 6A1, mitochondrial (COX6A1) from Ovis aries (Sheep).